The following is a 296-amino-acid chain: MSKISPINIKELLDAGVHFGHKTSRWNPKMASYIYGERDDVHIIDLRQSAALMSVALNAIYETVKKDGKILFVSTKIQASDIIAEYAEKCGQYYVNNRWLGGMLTNWKTIACSIEKLEKLEKTLESEEARICYTKKEILDMSRKKDKLLLSLAGIRNLNSKPDLLVVIDTNKEHIAINEAVKLNIPVVAVVDTNSNPDNVDYPIPGNDDSIRSIRLYCSLFADAALQGLEESMKVSGVDIGTMQDHTDKALTSSKTVSKLKQSKKLSKTQNIDEETNTEFDQALGGACENNNSDNT.

Residues 252 to 296 form a disordered region; sequence TSSKTVSKLKQSKKLSKTQNIDEETNTEFDQALGGACENNNSDNT.

The protein belongs to the universal ribosomal protein uS2 family.

The chain is Small ribosomal subunit protein uS2 (rpsB) from Rickettsia prowazekii (strain Madrid E).